The sequence spans 30 residues: Trypsin inhibitor 1 (30 aa).

Disulfide bonds link C4–C21, C11–C23, and C17–C29.

This sequence belongs to the protease inhibitor I7 (squash-type serine protease inhibitor) family.

The protein localises to the secreted. In terms of biological role, inhibits trypsin. The sequence is that of Trypsin inhibitor 1 from Momordica charantia (Bitter gourd).